The primary structure comprises 185 residues: Large ribosomal subunit protein uL5 (185 aa).

Belongs to the universal ribosomal protein uL5 family. Part of the 50S ribosomal subunit; part of the 5S rRNA/L5/L18/L25 subcomplex. Contacts the 5S rRNA and the P site tRNA. Forms a bridge to the 30S subunit in the 70S ribosome.

Its function is as follows. This is one of the proteins that bind and probably mediate the attachment of the 5S RNA into the large ribosomal subunit, where it forms part of the central protuberance. In the 70S ribosome it contacts protein S13 of the 30S subunit (bridge B1b), connecting the 2 subunits; this bridge is implicated in subunit movement. Contacts the P site tRNA; the 5S rRNA and some of its associated proteins might help stabilize positioning of ribosome-bound tRNAs. This chain is Large ribosomal subunit protein uL5, found in Protochlamydia amoebophila (strain UWE25).